The following is a 124-amino-acid chain: UPF0482 protein YpsIP31758_1865 (124 aa).

An N-terminal signal peptide occupies residues M1–A32. Residues G47 to T68 form a disordered region.

The protein belongs to the UPF0482 family.

This is UPF0482 protein YpsIP31758_1865 from Yersinia pseudotuberculosis serotype O:1b (strain IP 31758).